The primary structure comprises 256 residues: H-2 class II histocompatibility antigen, A-D alpha chain (256 aa).

The first 23 residues, 1-23, serve as a signal peptide directing secretion; the sequence is MPCSRALILGVLALNTMLSLCGG. Residues 24 to 111 are alpha-1; it reads EDDIEADHVG…KRSNFTPATN (88 aa). The Extracellular portion of the chain corresponds to 24-218; sequence EDDIEADHVG…IPAPMSELTE (195 aa). Residues 112–205 form an alpha-2 region; it reads EAPQATVFPK…GLEEPVLKHW (94 aa). The Ig-like C1-type domain maps to 114 to 206; the sequence is PQATVFPKSP…LEEPVLKHWE (93 aa). A disulfide bridge connects residues Cys-134 and Cys-190. A glycan (N-linked (GlcNAc...) asparagine) is linked at Asn-145. The interval 206 to 218 is connecting peptide; it reads EPEIPAPMSELTE. The chain crosses the membrane as a helical span at residues 219–244; sequence TVVCALGLSVGLVGIVVGTIFIIQGL. The Cytoplasmic portion of the chain corresponds to 245 to 256; it reads RSGGTSRHPGPL.

This sequence belongs to the MHC class II family.

The protein localises to the membrane. The sequence is that of H-2 class II histocompatibility antigen, A-D alpha chain (H2-Aa) from Mus musculus (Mouse).